We begin with the raw amino-acid sequence, 383 residues long: S-adenosylmethionine synthase (383 aa).

His-15 provides a ligand contact to ATP. Residue Asp-17 coordinates Mg(2+). Glu-43 lines the K(+) pocket. Positions 56 and 99 each coordinate L-methionine. A flexible loop region spans residues 99–109 (QSPDINQGVDR). ATP contacts are provided by residues 164–166 (DAK), 230–231 (RF), Asp-239, 245–246 (RK), Ala-262, and Lys-266. Position 239 (Asp-239) interacts with L-methionine. Residue Lys-270 participates in L-methionine binding.

Belongs to the AdoMet synthase family. Homotetramer; dimer of dimers. Mg(2+) is required as a cofactor. The cofactor is K(+).

The protein resides in the cytoplasm. The catalysed reaction is L-methionine + ATP + H2O = S-adenosyl-L-methionine + phosphate + diphosphate. Its pathway is amino-acid biosynthesis; S-adenosyl-L-methionine biosynthesis; S-adenosyl-L-methionine from L-methionine: step 1/1. Catalyzes the formation of S-adenosylmethionine (AdoMet) from methionine and ATP. The overall synthetic reaction is composed of two sequential steps, AdoMet formation and the subsequent tripolyphosphate hydrolysis which occurs prior to release of AdoMet from the enzyme. This chain is S-adenosylmethionine synthase, found in Actinobacillus pleuropneumoniae serotype 7 (strain AP76).